We begin with the raw amino-acid sequence, 906 residues long: MNPADADEEQRVSSVPAHRCRPGRIPSRSAETETEESSAEVAADTIGGDDSELEEGPLPGGDKEASAGNTNVSSGVACVAGFTSGGGVVSWRPESPSPDGTPSVLSLTRDSGPAVPSRGGRVSSGLSTFNPAGATRMELDSVEEEDDFGASLCKVSPPIQAMRMLMGKKCHCHGYWGKFRFCGVQEPARELPSDRNALWREMDTVSRHSAGLGSFRLFQLIMRHGPCLIRHSPRCDLLLGRFYFKANWARESRTPLCYASELCDESVRRFVLRHMEDLPKLAEETARFVELAGCWGLYAAILCLDKVCRQLHGQDESPGGVFLRIAVALTAAIENSRHSRIYRFHLDARFEGEVLESVLKRCRDGQLSLSTFTMSTVGFDRVPQYDFLISADPFSRDASWAAMCKWMSTLSCGVSVSVNVTRLNADVNSVIRCLGGYCDLIREKEVHRPVVRVFVDMWDVAAIRVINFILKESTSELTGVCYAFNVPSVLMKRYRAREQRYSLFGRPVSRRLSDLGQESAFEKEYSRCEQSCPKVVVNTDDFLKKMLLCALKGRASVVFVHHVVKYSIMADSVCLPPCLSPDMASCHFGECDMPVQRLTVNVARCVFARSDEQKLHLPDVVLGNTRRYFDLSVLRELVTEAVVWGNARLDALMSASEWWVESALEKLRPLHIGVAGLHTALMRLGFTYFASWDLIERIFEHMYFAAVRASVDLCKSGLPRCEWFERTIYQEGKFIFELYRLPRLSIASARWEALRADMLEFGLRNCQFLAVGPDDEVAHLWGVTPSVWASRGTVFEEETVWSLCPPNRECYFPTVVRRPLRVPVVNYAWLEQHQEEGKATQCLFQAAPAIQNDVEMAAVNLSVFVDQCVALVFYYDSGMTPDVLLARMLKWYHWRFKVGVYKYCAS.

Disordered regions lie at residues 1-70 (MNPA…AGNT) and 89-129 (VSWR…LSTF). The segment covering 98–109 (PDGTPSVLSLTR) has biased composition (polar residues).

It belongs to the ribonucleoside diphosphate reductase large chain family.

Its subcellular location is the virion. It is found in the host cytoplasm. Functionally, does not possess a ribonucleotide reductase activity. Betaherpesviruses probably use another strategy to expand the dNTP pool in a quiescent host cell. The chain is Ribonucleoside-diphosphate reductase large subunit-like protein from Homo sapiens (Human).